Here is a 370-residue protein sequence, read N- to C-terminus: 2-aminoethylphosphonate--pyruvate transaminase (370 aa).

Lysine 194 carries the N6-(pyridoxal phosphate)lysine modification.

This sequence belongs to the class-V pyridoxal-phosphate-dependent aminotransferase family. PhnW subfamily. Homodimer. The cofactor is pyridoxal 5'-phosphate.

It carries out the reaction (2-aminoethyl)phosphonate + pyruvate = phosphonoacetaldehyde + L-alanine. In terms of biological role, involved in phosphonate degradation. The protein is 2-aminoethylphosphonate--pyruvate transaminase of Paraburkholderia phymatum (strain DSM 17167 / CIP 108236 / LMG 21445 / STM815) (Burkholderia phymatum).